The chain runs to 255 residues: 5-oxoprolinase subunit A (255 aa).

Belongs to the LamB/PxpA family. In terms of assembly, forms a complex composed of PxpA, PxpB and PxpC.

It carries out the reaction 5-oxo-L-proline + ATP + 2 H2O = L-glutamate + ADP + phosphate + H(+). Functionally, catalyzes the cleavage of 5-oxoproline to form L-glutamate coupled to the hydrolysis of ATP to ADP and inorganic phosphate. This is 5-oxoprolinase subunit A from Rhodopseudomonas palustris (strain BisA53).